The chain runs to 353 residues: Putative glutamine synthetase (353 aa).

The region spanning 19–102 (SIIEYVWIGG…VICDTYDVNG (84 aa)) is the GS beta-grasp domain. Positions 109-353 (HRHNANIIFE…IILQTVCESD (245 aa)) constitute a GS catalytic domain.

Belongs to the glutamine synthetase family.

It catalyses the reaction L-glutamate + NH4(+) + ATP = L-glutamine + ADP + phosphate + H(+). This is Putative glutamine synthetase from Acanthamoeba polyphaga (Amoeba).